A 383-amino-acid chain; its full sequence is Prokineticin receptor 2 (383 aa).

Over methionine 1–isoleucine 54 the chain is Extracellular. Asparagine 7 and asparagine 27 each carry an N-linked (GlcNAc...) asparagine glycan. A helical membrane pass occupies residues valine 55–isoleucine 75. The Cytoplasmic segment spans residues alanine 76 to asparagine 89. The helical transmembrane segment at leucine 90–glutamate 110 threads the bilayer. Topologically, residues methionine 111–threonine 136 are extracellular. Cysteine 128 and cysteine 207 are joined by a disulfide. A helical transmembrane segment spans residues valine 137 to isoleucine 157. Residues valine 158–serine 170 lie on the Cytoplasmic side of the membrane. A helical transmembrane segment spans residues phenylalanine 171 to threonine 191. The Extracellular portion of the chain corresponds to threonine 192–tyrosine 222. Residues phenylalanine 223–alanine 243 form a helical membrane-spanning segment. Residues arginine 244 to threonine 272 are Cytoplasmic-facing. A helical membrane pass occupies residues valine 273–phenylalanine 293. Residues threonine 294–threonine 312 are Extracellular-facing. A helical transmembrane segment spans residues alanine 313–valine 333. The Cytoplasmic segment spans residues threonine 334–lysine 383.

Belongs to the G-protein coupled receptor 1 family. As to quaternary structure, homodimer. Abundantly expressed in the CNS and reproductive organs with the highest levels in the cerebrum, cerebellum, testis and ovary.

The protein resides in the cell membrane. Functionally, receptor for prokineticin 2. Exclusively coupled to the G(q) subclass of heteromeric G proteins. Activation leads to mobilization of calcium, stimulation of phosphoinositide turnover and activation of p44/p42 mitogen-activated protein kinase. The protein is Prokineticin receptor 2 (Prokr2) of Rattus norvegicus (Rat).